The chain runs to 469 residues: UDP-N-acetylmuramate--L-alanine ligase (469 aa).

ATP is bound at residue 119–125 (GTHGKTT).

The protein belongs to the MurCDEF family.

Its subcellular location is the cytoplasm. It carries out the reaction UDP-N-acetyl-alpha-D-muramate + L-alanine + ATP = UDP-N-acetyl-alpha-D-muramoyl-L-alanine + ADP + phosphate + H(+). Its pathway is cell wall biogenesis; peptidoglycan biosynthesis. Cell wall formation. This chain is UDP-N-acetylmuramate--L-alanine ligase, found in Ruthia magnifica subsp. Calyptogena magnifica.